The chain runs to 55 residues: UPF0291 protein CA_C2726 (55 aa).

It belongs to the UPF0291 family.

It localises to the cytoplasm. This Clostridium acetobutylicum (strain ATCC 824 / DSM 792 / JCM 1419 / IAM 19013 / LMG 5710 / NBRC 13948 / NRRL B-527 / VKM B-1787 / 2291 / W) protein is UPF0291 protein CA_C2726.